Reading from the N-terminus, the 111-residue chain is MKWKVLQLKTQEIKVNNLAKSSLHQPGSLVLRNRIRNNQTISNHQKVYITNLHKDKLKLNNLLRLMKSTNRHMPFRNLVLATGQELALLHNKRKRRKTLPLALFYSHLILL.

It is found in the cytoplasm. The protein resides in the nucleus. This is an uncharacterized protein from Saccharomyces cerevisiae (strain ATCC 204508 / S288c) (Baker's yeast).